Here is a 600-residue protein sequence, read N- to C-terminus: ATP-dependent lipid A-core flippase (600 aa).

The next 4 helical transmembrane spans lie at 26 to 46 (VGIF…QPML), 82 to 102 (LLIV…NYFL), 167 to 187 (VFLF…MLAI), and 266 to 286 (PMLQ…VLFL). One can recognise an ABC transmembrane type-1 domain in the interval 30-321 (LLSIIGFVIF…LSEVSSTIQK (292 aa)). Residues 353 to 589 (LEVKNLSFFY…NGYYARLHAM (237 aa)) enclose the ABC transporter domain. Residue 387–394 (GRSGSGKS) participates in ATP binding.

Belongs to the ABC transporter superfamily. Lipid exporter (TC 3.A.1.106) family. In terms of assembly, homodimer.

It localises to the cell inner membrane. The enzyme catalyses ATP + H2O + lipid A-core oligosaccharideSide 1 = ADP + phosphate + lipid A-core oligosaccharideSide 2.. Functionally, involved in lipopolysaccharide (LPS) biosynthesis. Translocates lipid A-core from the inner to the outer leaflet of the inner membrane. Transmembrane domains (TMD) form a pore in the inner membrane and the ATP-binding domain (NBD) is responsible for energy generation. The chain is ATP-dependent lipid A-core flippase from Pseudomonas savastanoi pv. phaseolicola (strain 1448A / Race 6) (Pseudomonas syringae pv. phaseolicola (strain 1448A / Race 6)).